The sequence spans 529 residues: Probable feruloyl esterase B-1 (529 aa).

Positions 1–19 (MKISYFFVASLSYVSVARA) are cleaved as a signal peptide. 2 disulfides stabilise this stretch: C27/C75 and C63/C114. Residues N53, N64, N85, N98, and N138 are each glycosylated (N-linked (GlcNAc...) asparagine). 4 disulfide bridges follow: C187–C445, C256–C273, C282–C295, and C505–C527. The active-site Acyl-ester intermediate is the S188. Residue N233 is glycosylated (N-linked (GlcNAc...) asparagine). Ca(2+)-binding residues include D257, D260, A262, D264, and L266. 3 N-linked (GlcNAc...) asparagine glycosylation sites follow: N286, N290, and N354. Catalysis depends on charge relay system residues D404 and H444.

It belongs to the tannase family.

Its subcellular location is the secreted. It carries out the reaction feruloyl-polysaccharide + H2O = ferulate + polysaccharide.. Functionally, involved in degradation of plant cell walls. Hydrolyzes the feruloyl-arabinose ester bond in arabinoxylans as well as the feruloyl-galactose and feruloyl-arabinose ester bonds in pectin. The sequence is that of Probable feruloyl esterase B-1 (faeB-1) from Aspergillus terreus (strain NIH 2624 / FGSC A1156).